Reading from the N-terminus, the 384-residue chain is N-acetylneuraminate epimerase (384 aa).

The first 24 residues, 1-24, serve as a signal peptide directing secretion; it reads MMKTKYLLLPLLASSSLLSHMAFA. Kelch repeat units lie at residues 46–90, 92–145, 147–184, 185–230, 233–281, 303–352, and 354–383; these read KVYV…TVVG, NIFV…YSPD, KQVLFFGGYSKPLFDKYLADITRTDKKAQPEQWQKIVD, DYMG…VIDG, ITLI…IAGA, AQFE…SVKG, and VLMVGGERADRTASTKVYLVGLNNNQIDIV. Glutamate 239 serves as the catalytic Proton acceptor.

This sequence belongs to the NanM family. Homodimer.

The protein resides in the periplasm. The enzyme catalyses N-acetyl-alpha-neuraminate = N-acetyl-beta-neuraminate. Its function is as follows. Converts alpha-N-acetylneuranimic acid (Neu5Ac) to the beta-anomer, accelerating the equilibrium between the alpha- and beta-anomers. Probably facilitates sialidase-negative bacteria to compete successfully for limited amounts of extracellular Neu5Ac, which is likely taken up in the beta-anomer. In addition, the rapid removal of sialic acid from solution might be advantageous to the bacterium to damp down host responses. The sequence is that of N-acetylneuraminate epimerase from Vibrio vulnificus (strain YJ016).